The chain runs to 375 residues: Trichodiene synthase (375 aa).

Belongs to the trichodiene synthase family.

It catalyses the reaction (2E,6E)-farnesyl diphosphate = trichodiene + diphosphate. It functions in the pathway sesquiterpene biosynthesis; trichothecene biosynthesis. In terms of biological role, TS is a member of the terpene cyclase group of enzymes. It catalyzes the isomerization and cyclization of farnesyl pyro-phosphate to form trichodiene, the first cyclic intermediate in the biosynthetic pathway for trichothecenes. It serves to branch trichothecene biosynthesis from the isoprenoid pathway. This chain is Trichodiene synthase (TRI5), found in Fusarium mesoamericanum.